The chain runs to 310 residues: Methionyl-tRNA formyltransferase (310 aa).

109-112 (SLLP) lines the (6S)-5,6,7,8-tetrahydrofolate pocket.

The protein belongs to the Fmt family.

The enzyme catalyses L-methionyl-tRNA(fMet) + (6R)-10-formyltetrahydrofolate = N-formyl-L-methionyl-tRNA(fMet) + (6S)-5,6,7,8-tetrahydrofolate + H(+). Its function is as follows. Attaches a formyl group to the free amino group of methionyl-tRNA(fMet). The formyl group appears to play a dual role in the initiator identity of N-formylmethionyl-tRNA by promoting its recognition by IF2 and preventing the misappropriation of this tRNA by the elongation apparatus. In Alkaliphilus oremlandii (strain OhILAs) (Clostridium oremlandii (strain OhILAs)), this protein is Methionyl-tRNA formyltransferase.